The following is a 146-amino-acid chain: Hemoglobin subunit beta (146 aa).

At Val1 the chain carries N-acetylvaline. The region spanning 2 to 146 is the Globin domain; sequence HLTAEEKSAV…VANALAHKYH (145 aa). Thr12 bears the Phosphothreonine mark. Ser44 bears the Phosphoserine mark. Lys59 carries the N6-acetyllysine modification. His63 provides a ligand contact to heme b. At Lys82 the chain carries N6-acetyllysine. His92 serves as a coordination point for heme b. Cys93 carries the S-nitrosocysteine modification. Lys144 is subject to N6-acetyllysine.

Belongs to the globin family. In terms of assembly, heterotetramer of two alpha chains and two beta chains. As to expression, red blood cells.

Involved in oxygen transport from the lung to the various peripheral tissues. The sequence is that of Hemoglobin subunit beta (HBB) from Meles meles (Eurasian badger).